A 333-amino-acid polypeptide reads, in one-letter code: Flap endonuclease 1 (333 aa).

Residues 1–99 (MGVALRDILA…ETNAERKKLR (99 aa)) are N-domain. The Mg(2+) site is built by D28, D81, E153, E155, D174, D176, and D235. Residues 117-256 (EAYRQARSAT…TALKIVKSGG (140 aa)) are I-domain. Residues 325-333 (GQKTLESFF) form an interaction with PCNA region.

This sequence belongs to the XPG/RAD2 endonuclease family. FEN1 subfamily. Interacts with PCNA. PCNA stimulates the nuclease activity without altering cleavage specificity. It depends on Mg(2+) as a cofactor.

In terms of biological role, structure-specific nuclease with 5'-flap endonuclease and 5'-3' exonuclease activities involved in DNA replication and repair. During DNA replication, cleaves the 5'-overhanging flap structure that is generated by displacement synthesis when DNA polymerase encounters the 5'-end of a downstream Okazaki fragment. Binds the unpaired 3'-DNA end and kinks the DNA to facilitate 5' cleavage specificity. Cleaves one nucleotide into the double-stranded DNA from the junction in flap DNA, leaving a nick for ligation. Also involved in the base excision repair (BER) pathway. Acts as a genome stabilization factor that prevents flaps from equilibrating into structures that lead to duplications and deletions. Also possesses 5'-3' exonuclease activity on nicked or gapped double-stranded DNA. This chain is Flap endonuclease 1, found in Methanoregula boonei (strain DSM 21154 / JCM 14090 / 6A8).